A 256-amino-acid chain; its full sequence is Acetyl-coenzyme A carboxylase carboxyl transferase subunit alpha (256 aa).

A CoA carboxyltransferase C-terminal domain is found at 1 to 236 (MSDVARILKE…KTAIVDELAE (236 aa)).

The protein belongs to the AccA family. As to quaternary structure, acetyl-CoA carboxylase is a heterohexamer composed of biotin carboxyl carrier protein (AccB), biotin carboxylase (AccC) and two subunits each of ACCase subunit alpha (AccA) and ACCase subunit beta (AccD).

It localises to the cytoplasm. It catalyses the reaction N(6)-carboxybiotinyl-L-lysyl-[protein] + acetyl-CoA = N(6)-biotinyl-L-lysyl-[protein] + malonyl-CoA. The protein operates within lipid metabolism; malonyl-CoA biosynthesis; malonyl-CoA from acetyl-CoA: step 1/1. In terms of biological role, component of the acetyl coenzyme A carboxylase (ACC) complex. First, biotin carboxylase catalyzes the carboxylation of biotin on its carrier protein (BCCP) and then the CO(2) group is transferred by the carboxyltransferase to acetyl-CoA to form malonyl-CoA. This chain is Acetyl-coenzyme A carboxylase carboxyl transferase subunit alpha, found in Streptococcus thermophilus (strain CNRZ 1066).